Here is a 203-residue protein sequence, read N- to C-terminus: Phosphatidylethanolamine N-methyltransferase (203 aa).

The catalysed reaction is a 1,2-diacyl-sn-glycero-3-phosphoethanolamine + S-adenosyl-L-methionine = a 1,2-diacyl-sn-glycero-3-phospho-N-methylethanolamine + S-adenosyl-L-homocysteine + H(+). The protein operates within phospholipid metabolism; phosphatidylcholine biosynthesis. This enzyme catalyzes three distinct methylation reactions for converting phosphatidylethanolamine to phosphatidylcholine. The sequence is that of Phosphatidylethanolamine N-methyltransferase (pmtA) from Cereibacter sphaeroides (Rhodobacter sphaeroides).